We begin with the raw amino-acid sequence, 160 residues long: Putative NrdI-like protein (160 aa).

Belongs to the NrdI family.

The sequence is that of Putative NrdI-like protein from Streptococcus pyogenes serotype M3 (strain ATCC BAA-595 / MGAS315).